Reading from the N-terminus, the 227-residue chain is Phosphoribosylformylglycinamidine synthase subunit PurQ (227 aa).

The 225-residue stretch at 2–226 (KFAVIQFPGS…VKAWKEEQVN (225 aa)) folds into the Glutamine amidotransferase type-1 domain. Residue Cys-86 is the Nucleophile of the active site. Active-site residues include His-195 and Glu-197.

As to quaternary structure, part of the FGAM synthase complex composed of 1 PurL, 1 PurQ and 2 PurS subunits.

The protein localises to the cytoplasm. It carries out the reaction N(2)-formyl-N(1)-(5-phospho-beta-D-ribosyl)glycinamide + L-glutamine + ATP + H2O = 2-formamido-N(1)-(5-O-phospho-beta-D-ribosyl)acetamidine + L-glutamate + ADP + phosphate + H(+). The catalysed reaction is L-glutamine + H2O = L-glutamate + NH4(+). Its pathway is purine metabolism; IMP biosynthesis via de novo pathway; 5-amino-1-(5-phospho-D-ribosyl)imidazole from N(2)-formyl-N(1)-(5-phospho-D-ribosyl)glycinamide: step 1/2. Part of the phosphoribosylformylglycinamidine synthase complex involved in the purines biosynthetic pathway. Catalyzes the ATP-dependent conversion of formylglycinamide ribonucleotide (FGAR) and glutamine to yield formylglycinamidine ribonucleotide (FGAM) and glutamate. The FGAM synthase complex is composed of three subunits. PurQ produces an ammonia molecule by converting glutamine to glutamate. PurL transfers the ammonia molecule to FGAR to form FGAM in an ATP-dependent manner. PurS interacts with PurQ and PurL and is thought to assist in the transfer of the ammonia molecule from PurQ to PurL. The sequence is that of Phosphoribosylformylglycinamidine synthase subunit PurQ from Listeria monocytogenes serovar 1/2a (strain ATCC BAA-679 / EGD-e).